The sequence spans 1004 residues: Retrovirus-related Pol polyprotein from type-1 retrotransposable element R1 (1004 aa).

Positions 450-717 constitute a Reverse transcriptase domain; it reads QCLLESYFPQ…SEVKHLGIFV (268 aa). The interval 853-1004 is nucleic acid-binding endonuclease; that stretch reads LSGSQFKELL…RLMRGMRIRE (152 aa).

It catalyses the reaction DNA(n) + a 2'-deoxyribonucleoside 5'-triphosphate = DNA(n+1) + diphosphate. This is Retrovirus-related Pol polyprotein from type-1 retrotransposable element R1 from Bradysia coprophila (Dark-winged fungus gnat).